The chain runs to 436 residues: 3-ketoacyl-CoA thiolase (436 aa).

Catalysis depends on cysteine 99, which acts as the Acyl-thioester intermediate. Residues histidine 392 and cysteine 422 each act as proton acceptor in the active site.

It belongs to the thiolase-like superfamily. Thiolase family. Heterotetramer of two alpha chains (FadJ) and two beta chains (FadI).

Its subcellular location is the cytoplasm. The enzyme catalyses an acyl-CoA + acetyl-CoA = a 3-oxoacyl-CoA + CoA. It participates in lipid metabolism; fatty acid beta-oxidation. Its function is as follows. Catalyzes the final step of fatty acid oxidation in which acetyl-CoA is released and the CoA ester of a fatty acid two carbons shorter is formed. This Salmonella schwarzengrund (strain CVM19633) protein is 3-ketoacyl-CoA thiolase.